A 319-amino-acid chain; its full sequence is Cytochrome c biogenesis protein CcsA (319 aa).

Transmembrane regions (helical) follow at residues 17 to 37 (TISIVITIHLITLLVHELGGL), 44 to 64 (GMIVTFFSITGFLVSRWASSG), 68 to 88 (LSNLYESLIFLSWALYILHTI), 143 to 163 (MLLSYATLLCGSLLSAAILII), 223 to 243 (VISLGFTLLTIGILCGAVWAN), 257 to 271 (TWAFITWTIFAIYLH), and 286 to 306 (VASIGFLIIWICYFGINLLGI).

It belongs to the CcmF/CycK/Ccl1/NrfE/CcsA family. May interact with Ccs1.

Its subcellular location is the plastid. The protein localises to the chloroplast thylakoid membrane. Its function is as follows. Required during biogenesis of c-type cytochromes (cytochrome c6 and cytochrome f) at the step of heme attachment. This is Cytochrome c biogenesis protein CcsA from Lolium perenne (Perennial ryegrass).